The sequence spans 509 residues: Methylmalonyl-CoA decarboxylase subunit alpha (509 aa).

Residues 4–260 (VQEKIELLHE…NNMEDAPLVD (257 aa)) form the CoA carboxyltransferase N-terminal domain. The region spanning 267–503 (REDESLNSLL…SKRENRAPKK (237 aa)) is the CoA carboxyltransferase C-terminal domain.

It belongs to the AccD/PCCB family. In terms of assembly, the methylmalonyl-CoA decarboxylase is composed of five subunits: the carboxyltransferase alpha subunit (MmdA), the tunnel beta subunit (MmdB), the biotin-containing gamma subunit (MmdC), and the delta (MmdD) and epsilon (MmdE) subunits. Interacts with the gamma subunit.

It localises to the cell membrane. It catalyses the reaction (S)-methylmalonyl-CoA + Na(+)(in) + H(+)(out) = propanoyl-CoA + Na(+)(out) + CO2. Completely inhibited by avidin. In terms of biological role, carboxyltransferase subunit of the sodium ion pump methylmalonyl-CoA decarboxylase, which converts the chemical energy of a decarboxylation reaction into an electrochemical gradient of Na(+) ions across the cytoplasmic membrane, thereby creating a sodium ion motive force that is used for ATP synthesis. The alpha subunit catalyzes the Na(+)-independent carboxyltransfer from methylmalonyl-CoA to the prosthetic biotin group located on the gamma subunit. Can also convert malonyl-CoA into acetyl-CoA. The sequence is that of Methylmalonyl-CoA decarboxylase subunit alpha from Veillonella parvula (Staphylococcus parvulus).